The primary structure comprises 386 residues: Histidinol-phosphate aminotransferase (386 aa).

Positions 1 to 11 (MMVRKSTASNR) are enriched in polar residues. The interval 1-22 (MMVRKSTASNRRLQDKGDEEPV) is disordered. At Lys248 the chain carries N6-(pyridoxal phosphate)lysine.

It belongs to the class-II pyridoxal-phosphate-dependent aminotransferase family. Histidinol-phosphate aminotransferase subfamily. As to quaternary structure, homodimer. Requires pyridoxal 5'-phosphate as cofactor.

The catalysed reaction is L-histidinol phosphate + 2-oxoglutarate = 3-(imidazol-4-yl)-2-oxopropyl phosphate + L-glutamate. It participates in amino-acid biosynthesis; L-histidine biosynthesis; L-histidine from 5-phospho-alpha-D-ribose 1-diphosphate: step 7/9. The polypeptide is Histidinol-phosphate aminotransferase (Moorella thermoacetica (strain ATCC 39073 / JCM 9320)).